Reading from the N-terminus, the 274-residue chain is uncharacterized protein (274 aa).

The protein localises to the plastid. Its subcellular location is the chloroplast. This is an uncharacterized protein from Euglena gracilis.